We begin with the raw amino-acid sequence, 212 residues long: HTH-type transcriptional repressor KstR (212 aa).

The span at 1–11 (MTTSSRSRSST) shows a compositional bias: low complexity. The segment at 1 to 28 (MTTSSRSRSSTVAAATLGEDDLSSNAQK) is disordered. In terms of domain architecture, HTH tetR-type spans 28–88 (KERRKRILDA…SALAREFERI (61 aa)). The segment at residues 51 to 70 (QMRAVAERADVAVGTLYRYF) is a DNA-binding region (H-T-H motif).

In terms of assembly, homodimer.

In terms of biological role, controls the expression of genes used for utilizing diverse lipids as energy sources. The sequence is that of HTH-type transcriptional repressor KstR (kstR) from Rhodococcus jostii (strain RHA1).